A 109-amino-acid polypeptide reads, in one-letter code: uncharacterized protein (109 aa).

An N-terminal signal peptide occupies residues 1 to 28; the sequence is MNMLAYFLYCRQLLLAVVLIEFPPRLCG.

This is an uncharacterized protein from Homo sapiens (Human).